Here is a 139-residue protein sequence, read N- to C-terminus: Ribulose bisphosphate carboxylase small subunit (139 aa).

Belongs to the RuBisCO small chain family. As to quaternary structure, heterohexadecamer of 8 large and 8 small subunits.

The protein resides in the plastid. The protein localises to the chloroplast. RuBisCO catalyzes two reactions: the carboxylation of D-ribulose 1,5-bisphosphate, the primary event in carbon dioxide fixation, as well as the oxidative fragmentation of the pentose substrate in the photorespiration process. Both reactions occur simultaneously and in competition at the same active site. Although the small subunit is not catalytic it is essential for maximal activity. The sequence is that of Ribulose bisphosphate carboxylase small subunit from Thalassiosira nordenskioeldii (Marine diatom).